The primary structure comprises 243 residues: MGGRDTDVVLLDENGIRCDGRKISETRRVEITAGVLNNANGSAYIEFGDNKILAGIFGPRDVHPKHMVRTETGILRCRYHMSPFSVSERKKPAPSRREIEISKVIKEALEPSLMLEQFPRTAVDVFIEVLQADGGSRCAALAAASVALADAGIPMRDMVSACAAGKVADTIVLDVNNEEDQAGQADMPVGYMPNLDQVTLIQLDGVLTPDEYSRCAAMAIDGCKQVYEVQKKALSDRFFGGGE.

It belongs to the RNase PH family. Rrp41 subfamily. As to quaternary structure, component of the archaeal exosome complex. Forms a hexameric ring-like arrangement composed of 3 Rrp41-Rrp42 heterodimers. The hexameric ring associates with a trimer of Rrp4 and/or Csl4 subunits.

It is found in the cytoplasm. In terms of biological role, catalytic component of the exosome, which is a complex involved in RNA degradation. Has 3'-&gt;5' exoribonuclease activity. Can also synthesize heteromeric RNA-tails. This Cenarchaeum symbiosum (strain A) protein is Exosome complex component Rrp41.